Reading from the N-terminus, the 437-residue chain is tRNA(Ile)-lysidine synthase (437 aa).

Residue 22-27 participates in ATP binding; sequence SGGLDS.

This sequence belongs to the tRNA(Ile)-lysidine synthase family.

It localises to the cytoplasm. The enzyme catalyses cytidine(34) in tRNA(Ile2) + L-lysine + ATP = lysidine(34) in tRNA(Ile2) + AMP + diphosphate + H(+). Functionally, ligates lysine onto the cytidine present at position 34 of the AUA codon-specific tRNA(Ile) that contains the anticodon CAU, in an ATP-dependent manner. Cytidine is converted to lysidine, thus changing the amino acid specificity of the tRNA from methionine to isoleucine. In Xylella fastidiosa (strain Temecula1 / ATCC 700964), this protein is tRNA(Ile)-lysidine synthase.